The chain runs to 657 residues: Glycogen debranching enzyme (657 aa).

The active-site Nucleophile is aspartate 336. The active-site Proton donor is glutamate 371. Residues 460 to 479 are disordered; it reads ANGEENRDGTNNNYSNNHGK.

This sequence belongs to the glycosyl hydrolase 13 family.

The catalysed reaction is Hydrolysis of (1-&gt;6)-alpha-D-glucosidic linkages to branches with degrees of polymerization of three or four glucose residues in limit dextrin.. It functions in the pathway glycan degradation; glycogen degradation. Removes maltotriose and maltotetraose chains that are attached by 1,6-alpha-linkage to the limit dextrin main chain, generating a debranched limit dextrin. In Escherichia coli O1:K1 / APEC, this protein is Glycogen debranching enzyme.